The primary structure comprises 571 residues: Leucine aminopeptidase A1, chloroplastic (571 aa).

A chloroplast-targeting transit peptide spans 1–53; it reads MATLRVSSLFASSSSSLHSNPSVFTKYQSSPKWAFSFPVTPLCSKRSKRIVHC. Positions 342 and 347 each coordinate Mg(2+). Lys-354 is a catalytic residue. The Mg(2+) site is built by Asp-367, Asp-427, and Glu-429. Residue Arg-431 is part of the active site.

Belongs to the peptidase M17 family. In terms of assembly, homohexamer (dimer of homotrimers). Mg(2+) serves as cofactor. Observed during floral development. Expressed in healthy and senescent leaves, cotyledons (emergence from seed coats), pistils, sepals, petals, stamens, and floral buds (at protein level). Present at very low levels in healthy leaves.

The protein localises to the plastid. It localises to the chloroplast. The enzyme catalyses Release of an N-terminal amino acid, Xaa-|-Yaa-, in which Xaa is preferably Leu, but may be other amino acids including Pro although not Arg or Lys, and Yaa may be Pro. Amino acid amides and methyl esters are also readily hydrolyzed, but rates on arylamides are exceedingly low.. It catalyses the reaction Release of N-terminal proline from a peptide.. Its function is as follows. Catalyzes the removal of unsubstituted N-terminal amino acids from various peptides. When associated as homohexamer, catalyzes the proteolyzes of Xaa-Leu dipeptides. Possesses leucine aminopeptidase activity against the model substrate leucine-amido methyl coumarin. Presumably involved in the processing and regular turnover of intracellular proteins. Regulates wound signaling and has a role in insect defense. In terms of biological role, functions as a molecular chaperone to protect proteins from heat-induced damage. This Solanum lycopersicum (Tomato) protein is Leucine aminopeptidase A1, chloroplastic.